The following is a 283-amino-acid chain: Nucleotide-binding protein Sama_3091 (283 aa).

8-15 (GRSGSGKS) lines the ATP pocket. A GTP-binding site is contributed by 56-59 (DIRN).

This sequence belongs to the RapZ-like family.

Functionally, displays ATPase and GTPase activities. This is Nucleotide-binding protein Sama_3091 from Shewanella amazonensis (strain ATCC BAA-1098 / SB2B).